Reading from the N-terminus, the 916-residue chain is Translation initiation factor IF-2 (916 aa).

The disordered stretch occupies residues Glu-55 to Thr-324. A compositionally biased stretch (low complexity) spans Ala-77–Ala-88. Basic and acidic residues-rich tracts occupy residues Phe-98 to Asn-121, Arg-129 to Asn-161, and Arg-198 to Arg-212. The segment covering Lys-227 to Val-250 has biased composition (low complexity). Residues Ala-264–Lys-281 show a composition bias toward basic and acidic residues. Over residues Lys-291–Asn-304 the composition is skewed to low complexity. Positions Lys-305–Arg-314 are enriched in basic residues. The region spanning Glu-418–Glu-585 is the tr-type G domain. A G1 region spans residues Gly-427–Thr-434. Gly-427–Thr-434 lines the GTP pocket. The segment at Gly-452 to His-456 is G2. The tract at residues Asp-473 to Gly-476 is G3. GTP-binding positions include Asp-473–His-477 and Asn-527–Asp-530. The G4 stretch occupies residues Asn-527 to Asp-530. A G5 region spans residues Ser-563–Lys-565.

The protein belongs to the TRAFAC class translation factor GTPase superfamily. Classic translation factor GTPase family. IF-2 subfamily.

It localises to the cytoplasm. One of the essential components for the initiation of protein synthesis. Protects formylmethionyl-tRNA from spontaneous hydrolysis and promotes its binding to the 30S ribosomal subunits. Also involved in the hydrolysis of GTP during the formation of the 70S ribosomal complex. This Streptococcus mutans serotype c (strain ATCC 700610 / UA159) protein is Translation initiation factor IF-2.